Consider the following 148-residue polypeptide: Lysozyme C (148 aa).

The N-terminal stretch at 1–18 (MKALIILGLVLLSVTVQG) is a signal peptide. Residues 19-148 (KIFERCELAR…VSQYVEGCGV (130 aa)) enclose the C-type lysozyme domain. 4 disulfides stabilise this stretch: C24–C146, C48–C134, C83–C99, and C95–C113. Active-site residues include E53 and D71.

Belongs to the glycosyl hydrolase 22 family. In terms of assembly, monomer.

It carries out the reaction Hydrolysis of (1-&gt;4)-beta-linkages between N-acetylmuramic acid and N-acetyl-D-glucosamine residues in a peptidoglycan and between N-acetyl-D-glucosamine residues in chitodextrins.. Its function is as follows. Lysozymes have primarily a bacteriolytic function; those in tissues and body fluids are associated with the monocyte-macrophage system and enhance the activity of immunoagents. The chain is Lysozyme C (LYZ) from Colobus angolensis (Angolan colobus).